A 298-amino-acid polypeptide reads, in one-letter code: Trimeric intracellular cation channel type A (298 aa).

Over 1-18 (MDLMSALSLGELALSFSR) the chain is Lumenal. A helical membrane pass occupies residues 19–39 (VPLFPVFDLSYFIVSIIYLKY). Residues 40 to 51 (EPGAVELSRRHP) are Cytoplasmic-facing. A helical transmembrane segment spans residues 52-72 (VASWLCAMLHCFGSYILADLL). At 73 to 85 (LGEPIIDYFSNSS) the chain is on the lumenal side. G74 is a Ca(2+) binding site. The chain crosses the membrane as a helical span at residues 86–106 (SILLASGVWYLIFFCPLDLFY). Topologically, residues 107–144 (KCVCFLPVKLIFVAMKEVVRVRKIAVGIHHAHHHYHHG) are cytoplasmic. Positions 122 and 126 each coordinate a 1,2-diacyl-sn-glycero-3-phospho-(1D-myo-inositol-4,5-bisphosphate). Residues 145-165 (WFIMIATGWVKGSGVALLSNV) form a helical membrane-spanning segment. The Lumenal segment spans residues 166–178 (EQLLRGVWKPETN). A helical membrane pass occupies residues 179-199 (EILHMSFPTKASLYGAILFTL). Residues 200 to 209 (QQTRWLPVSK) are Cytoplasmic-facing. Residues 210-230 (ASLIFVFTMFMVSCKVFLTAT) form a helical membrane-spanning segment. Over 231-234 (HSHS) the chain is Lumenal. A helical membrane pass occupies residues 235-255 (SPFDILEGYICPVLFGATWGG). At 256 to 298 (DHHHDNHGAPHGMGLGTQHSGLPAKAKEELGEGSRKKKTKKAD) the chain is on the cytoplasmic side. Positions 260-298 (DNHGAPHGMGLGTQHSGLPAKAKEELGEGSRKKKTKKAD) are disordered. Over residues 280 to 289 (KAKEELGEGS) the composition is skewed to basic and acidic residues.

Belongs to the TMEM38 family. As to quaternary structure, homotrimer; conformation seems to be controled by binding to diacylglycerol (DAG). Expressed at high levels in heart and striated muscle. Also detected in brain, lung and kidney.

Its subcellular location is the sarcoplasmic reticulum membrane. The protein resides in the nucleus membrane. It carries out the reaction K(+)(in) = K(+)(out). Channel activity is activated by a change of voltage within the sarcoplasmic reticulum lumen and blocked by luminal high Ca(2+) levels. In terms of biological role, intracellular monovalent cation channel required for maintenance of rapid intracellular calcium release. Acts as a potassium counter-ion channel that functions in synchronization with calcium release from intracellular stores. Opened by a change of voltage within the sarcoplasmic reticulum lumen. In Mus musculus (Mouse), this protein is Trimeric intracellular cation channel type A (Tmem38a).